A 2194-amino-acid chain; its full sequence is Glutamate synthase [NADH], amyloplastic (2194 aa).

The N-terminal 101 residues, 1-101, are a transit peptide targeting the amyloplast; sequence MSNSLSLTFT…LYDPAFDKDS (101 aa). Cys102 acts as the Nucleophile in catalysis. One can recognise a Glutamine amidotransferase type-2 domain in the interval 102–503; it reads CGVGFVAELN…PGMMLLVDFE (402 aa). Residues 1021–1045 are disordered; it reads GGKSNTGEGGEQPSRMEPLADGSRN. Residue 1193 to 1250 coordinates FMN; sequence LAETHQTLVANDLRGRTTLQTDGQLKTGRDVAIAALLGAEEYGFSTAPLITLGCIMMR. [3Fe-4S] cluster is bound by residues Cys1246, Cys1252, and Cys1257. Residue 1974 to 1988 participates in NAD(+) binding; sequence GGGDTGTDCIGTSIR.

The protein belongs to the glutamate synthase family. As to quaternary structure, monomer. The cofactor is [3Fe-4S] cluster. Requires FAD as cofactor. FMN is required as a cofactor. Expressed in infected cells in root nodules. Barely detected in roots and stems.

The protein localises to the plastid. It localises to the amyloplast. The enzyme catalyses 2 L-glutamate + NAD(+) = L-glutamine + 2-oxoglutarate + NADH + H(+). It participates in amino-acid biosynthesis; L-glutamate biosynthesis via GLT pathway; L-glutamate from 2-oxoglutarate and L-glutamine (NAD(+) route): step 1/1. Its pathway is energy metabolism; nitrogen metabolism. Its activity is regulated as follows. Inhibited by malate, citrate, glutamate, NAD(+) and azaserine, but not by 2-2' dipyridil and N-ethylmaleimide. Its function is as follows. Required for the assimilation of symbiotically fixed nitrogen into amino acids in root nodules. The protein is Glutamate synthase [NADH], amyloplastic of Medicago sativa (Alfalfa).